The sequence spans 106 residues: UPF0145 protein Athe_0545 (106 aa).

It belongs to the UPF0145 family.

In Caldicellulosiruptor bescii (strain ATCC BAA-1888 / DSM 6725 / KCTC 15123 / Z-1320) (Anaerocellum thermophilum), this protein is UPF0145 protein Athe_0545.